A 222-amino-acid chain; its full sequence is uncharacterized protein (222 aa).

Residues 1–27 constitute a signal peptide (tat-type signal); the sequence is MSFTRRKFVLGMGTVIFFTGSASSLLA. 3 4Fe-4S ferredoxin-type domains span residues 37–67, 83–114, and 115–144; these read YAMI…AQGS, TQYH…RDEQ, and GIVR…LNPV. 16 residues coordinate [4Fe-4S] cluster: Cys-46, Cys-49, Cys-52, Cys-56, Cys-92, Cys-95, Cys-100, Cys-104, Cys-124, Cys-127, Cys-130, Cys-134, Cys-151, Cys-154, Cys-167, and Cys-171.

Post-translationally, exported by the Tat system. The position of the signal peptide cleavage has not been experimentally proven. Can also be exported by the Sec system.

This is an uncharacterized protein from Escherichia coli (strain K12).